We begin with the raw amino-acid sequence, 275 residues long: Mitochondrial prohibitin complex protein 1 (275 aa).

Residues 180–213 are a coiled coil; sequence REFTEAVEMKQVAQQEAEKARYLVEKAEQMKIAA.

The protein belongs to the prohibitin family. As to quaternary structure, high molecular weight complex that consist of phb-1 and phb-2.

It is found in the mitochondrion inner membrane. Its function is as follows. PHB proteins are essential during embryonic development and are required for somatic and germline differentiation in the larval gonad. A deficiency in PHB proteins results in altered mitochondrial biogenesis in body wall muscle cells. In Caenorhabditis elegans, this protein is Mitochondrial prohibitin complex protein 1 (phb-1).